Reading from the N-terminus, the 357-residue chain is tRNA N6-adenosine threonylcarbamoyltransferase (357 aa).

Positions 120 and 124 each coordinate Fe cation. Substrate-binding positions include 143 to 147 (LVSGG), Asp-176, Gly-189, and Asn-289. Fe cation is bound at residue Asp-317.

The protein belongs to the KAE1 / TsaD family. Fe(2+) is required as a cofactor.

It is found in the cytoplasm. It catalyses the reaction L-threonylcarbamoyladenylate + adenosine(37) in tRNA = N(6)-L-threonylcarbamoyladenosine(37) in tRNA + AMP + H(+). In terms of biological role, required for the formation of a threonylcarbamoyl group on adenosine at position 37 (t(6)A37) in tRNAs that read codons beginning with adenine. Is involved in the transfer of the threonylcarbamoyl moiety of threonylcarbamoyl-AMP (TC-AMP) to the N6 group of A37, together with TsaE and TsaB. TsaD likely plays a direct catalytic role in this reaction. In Polynucleobacter asymbioticus (strain DSM 18221 / CIP 109841 / QLW-P1DMWA-1) (Polynucleobacter necessarius subsp. asymbioticus), this protein is tRNA N6-adenosine threonylcarbamoyltransferase.